A 275-amino-acid polypeptide reads, in one-letter code: tRNA-splicing endonuclease subunit SEN34 (275 aa).

Active-site residues include Y209, H217, and K250.

It belongs to the tRNA-intron endonuclease family. Heterotetramer composed of SEN2, SEN15, SEN34 and SEN54. Interacts directly with SEN15.

The protein resides in the nucleus. Its subcellular location is the endomembrane system. It localises to the mitochondrion outer membrane. It catalyses the reaction pretRNA = a 3'-half-tRNA molecule with a 5'-OH end + a 5'-half-tRNA molecule with a 2',3'-cyclic phosphate end + an intron with a 2',3'-cyclic phosphate and a 5'-hydroxyl terminus.. Constitutes one of the two catalytic subunit of the tRNA-splicing endonuclease complex, a complex responsible for identification and cleavage of the splice sites in pre-tRNA. It cleaves pre-tRNA at the 5'- and 3'-splice sites to release the intron. The products are an intron and two tRNA half-molecules bearing 2',3'-cyclic phosphate and 5'-OH termini. There are no conserved sequences at the splice sites, but the intron is invariably located at the same site in the gene, placing the splice sites an invariant distance from the constant structural features of the tRNA body. It probably carries the active site for 3'-splice site cleavage. This chain is tRNA-splicing endonuclease subunit SEN34 (SEN34), found in Saccharomyces cerevisiae (strain ATCC 204508 / S288c) (Baker's yeast).